Reading from the N-terminus, the 395-residue chain is Gastric triacylglycerol lipase (395 aa).

A signal peptide spans M1–G18. N-linked (GlcNAc...) asparagine glycosylation is found at N33, N68, and N98. The 300-residue stretch at P77–W376 folds into the AB hydrolase-1 domain. S171 acts as the Nucleophile in catalysis. Cysteines 245 and 254 form a disulfide. An N-linked (GlcNAc...) asparagine glycan is attached at N270. Catalysis depends on charge relay system residues D342 and H371.

This sequence belongs to the AB hydrolase superfamily. Lipase family. In terms of tissue distribution, secreted by the serous (von Ebner's) glands at the back of the rat tongue.

Its subcellular location is the secreted. The catalysed reaction is a triacylglycerol + H2O = a diacylglycerol + a fatty acid + H(+). The enzyme catalyses 1,2,3-tri-(9Z-octadecenoyl)-glycerol + H2O = 1,2-di-(9Z-octadecenoyl)-sn-glycerol + (9Z)-octadecenoate + H(+). It carries out the reaction 1,2,3-trioctanoylglycerol + H2O = 1,2-dioctanoyl-sn-glycerol + octanoate + H(+). Functionally, catalyzes the hydrolysis of triacylglycerols to yield free fatty acids, diacylglycerol, monoacylglycerol, and glycerol. Shows a preferential hydrolysis at the sn-3 position of triacylglycerol. This Rattus norvegicus (Rat) protein is Gastric triacylglycerol lipase (Lipf).